Consider the following 562-residue polypeptide: Dihydroxy-acid dehydratase (562 aa).

Aspartate 80 is a Mg(2+) binding site. Cysteine 121 contacts [2Fe-2S] cluster. Mg(2+) is bound by residues aspartate 122 and lysine 123. At lysine 123 the chain carries N6-carboxylysine. Residue cysteine 194 coordinates [2Fe-2S] cluster. Position 446 (glutamate 446) interacts with Mg(2+). Serine 472 functions as the Proton acceptor in the catalytic mechanism.

Belongs to the IlvD/Edd family. As to quaternary structure, homodimer. [2Fe-2S] cluster serves as cofactor. It depends on Mg(2+) as a cofactor.

It catalyses the reaction (2R)-2,3-dihydroxy-3-methylbutanoate = 3-methyl-2-oxobutanoate + H2O. The enzyme catalyses (2R,3R)-2,3-dihydroxy-3-methylpentanoate = (S)-3-methyl-2-oxopentanoate + H2O. Its pathway is amino-acid biosynthesis; L-isoleucine biosynthesis; L-isoleucine from 2-oxobutanoate: step 3/4. The protein operates within amino-acid biosynthesis; L-valine biosynthesis; L-valine from pyruvate: step 3/4. Its function is as follows. Functions in the biosynthesis of branched-chain amino acids. Catalyzes the dehydration of (2R,3R)-2,3-dihydroxy-3-methylpentanoate (2,3-dihydroxy-3-methylvalerate) into 2-oxo-3-methylpentanoate (2-oxo-3-methylvalerate) and of (2R)-2,3-dihydroxy-3-methylbutanoate (2,3-dihydroxyisovalerate) into 2-oxo-3-methylbutanoate (2-oxoisovalerate), the penultimate precursor to L-isoleucine and L-valine, respectively. This is Dihydroxy-acid dehydratase from Macrococcus caseolyticus (strain JCSC5402) (Macrococcoides caseolyticum).